Here is a 286-residue protein sequence, read N- to C-terminus: NADH-cytochrome b5 reductase 1 (286 aa).

Residues 6–26 form a helical membrane-spanning segment; it reads FILVIIGSVALAAGVKYVFTL. The region spanning 52 to 155 is the FAD-binding FR-type domain; sequence QEYRKFQLKE…KGPKGKFNYQ (104 aa). FAD contacts are provided by residues 135-150 and 161-193; these read DNMF…GPKG and SIGM…EISL.

It belongs to the flavoprotein pyridine nucleotide cytochrome reductase family. As to quaternary structure, monomer. The cofactor is FAD.

The protein resides in the endoplasmic reticulum membrane. It is found in the mitochondrion outer membrane. It carries out the reaction 2 Fe(III)-[cytochrome b5] + NADH = 2 Fe(II)-[cytochrome b5] + NAD(+) + H(+). Its function is as follows. Electron donor reductase for cytochrome b5. The cytochrome b5/NADH cytochrome b5 reductase electron transfer system supports the catalytic activity of several sterol biosynthetic enzymes. This is NADH-cytochrome b5 reductase 1 (cyb5r1) from Dictyostelium discoideum (Social amoeba).